Consider the following 233-residue polypeptide: Large ribosomal subunit protein uL1 (233 aa).

Belongs to the universal ribosomal protein uL1 family. As to quaternary structure, part of the 50S ribosomal subunit.

Functionally, binds directly to 23S rRNA. The L1 stalk is quite mobile in the ribosome, and is involved in E site tRNA release. In terms of biological role, protein L1 is also a translational repressor protein, it controls the translation of the L11 operon by binding to its mRNA. The polypeptide is Large ribosomal subunit protein uL1 (Brucella anthropi (strain ATCC 49188 / DSM 6882 / CCUG 24695 / JCM 21032 / LMG 3331 / NBRC 15819 / NCTC 12168 / Alc 37) (Ochrobactrum anthropi)).